The following is a 635-amino-acid chain: Membrane protein insertase YidC (635 aa).

Residues 8-28 (LILAMVLSALVMLVWSIFFAP) traverse the membrane as a helical segment. The disordered stretch occupies residues 33–61 (PAQDTPAASTQGTAQPEAGGPATPGAVPQ). 4 helical membrane-spanning segments follow: residues 396–416 (MIGN…LLVF), 470–490 (LPVL…FVTI), 528–548 (SFLH…SMWM), and 564–584 (IFAW…SGLV). Residues 615–635 (IRSSLPSRAKAGDKGGDKGGK) form a disordered region. Positions 624 to 635 (KAGDKGGDKGGK) are enriched in basic and acidic residues.

It belongs to the OXA1/ALB3/YidC family. Type 1 subfamily. Interacts with the Sec translocase complex via SecD. Specifically interacts with transmembrane segments of nascent integral membrane proteins during membrane integration.

The protein resides in the cell inner membrane. Its function is as follows. Required for the insertion and/or proper folding and/or complex formation of integral membrane proteins into the membrane. Involved in integration of membrane proteins that insert both dependently and independently of the Sec translocase complex, as well as at least some lipoproteins. Aids folding of multispanning membrane proteins. This is Membrane protein insertase YidC from Paracoccus denitrificans (strain Pd 1222).